The sequence spans 489 residues: Para-nitrobenzyl esterase (489 aa).

Ser189 (acyl-ester intermediate) is an active-site residue. At Ser189 the chain carries Phosphoserine. Active-site charge relay system residues include Glu310 and His399.

It belongs to the type-B carboxylesterase/lipase family. As to quaternary structure, monomer.

In terms of biological role, catalyzes hydrolysis of several beta-lactam antibiotic PNB esters to the corresponding free acid and PNB alcohol. This Bacillus subtilis (strain 168) protein is Para-nitrobenzyl esterase (pnbA).